The primary structure comprises 177 residues: Large ribosomal subunit protein uL6 (177 aa).

It belongs to the universal ribosomal protein uL6 family. Part of the 50S ribosomal subunit.

In terms of biological role, this protein binds to the 23S rRNA, and is important in its secondary structure. It is located near the subunit interface in the base of the L7/L12 stalk, and near the tRNA binding site of the peptidyltransferase center. The chain is Large ribosomal subunit protein uL6 from Sinorhizobium medicae (strain WSM419) (Ensifer medicae).